Here is a 248-residue protein sequence, read N- to C-terminus: MAGHSQFKNIMHRKGRQDAQKSKLFGKLAREITVAAKLGTPDPAMNPRLRAAVIAARAENMPKDNIERAIKKALGSDGENYDEIRYEGYGPGGVAVIVEALTDNRNRAASDIRSFFTKSGGNLGETGSVSFMFDRTGIIEYDRSVASDDAVLDAAIEAGADDVVSGEGGHEIYASTEGYRDVAKALEAKFGEPRKAALIWKPQNTVAVDDETGEKLLKLMDLLNEHDDVQNVYANFEVSDALVAKMGG.

The segment at 1-21 is disordered; the sequence is MAGHSQFKNIMHRKGRQDAQK.

The protein belongs to the TACO1 family.

The protein resides in the cytoplasm. The polypeptide is Probable transcriptional regulatory protein blr1534 (Bradyrhizobium diazoefficiens (strain JCM 10833 / BCRC 13528 / IAM 13628 / NBRC 14792 / USDA 110)).